The following is a 182-amino-acid chain: MIDKEKIIEGIKLFLEGIGEDITREGIKETPERVAKMWEEFEKERSFDFKLFEEYSNYSEMIIVKDIPFYSMCEHHLLPFFGKAHIAYIPNKKICGLSKLVRTVRAMALKPQVQERLTEEIADIVQKELEPMGVGVVIEAEHLCMSMRGVRSPGHCTVTSSLRGNFLSDIRTKEEFFKLIRQ.

Residues Cys-73, His-76, and Cys-144 each contribute to the Zn(2+) site.

It belongs to the GTP cyclohydrolase I family. As to quaternary structure, homomer.

The catalysed reaction is GTP + H2O = 7,8-dihydroneopterin 3'-triphosphate + formate + H(+). Its pathway is cofactor biosynthesis; 7,8-dihydroneopterin triphosphate biosynthesis; 7,8-dihydroneopterin triphosphate from GTP: step 1/1. This is GTP cyclohydrolase 1 from Hydrogenobaculum sp. (strain Y04AAS1).